The following is a 393-amino-acid chain: Branched-chain-amino-acid aminotransferase, mitochondrial (393 aa).

Residues 1 to 27 constitute a mitochondrion transit peptide; sequence MSAAILGQVWTRKLLPIPWRLCVPGRC. Tyr169 provides a ligand contact to substrate. An N6-(pyridoxal phosphate)lysine modification is found at Lys230. Lys322 bears the N6-acetyllysine mark.

The protein belongs to the class-IV pyridoxal-phosphate-dependent aminotransferase family. In terms of assembly, homodimer. It depends on pyridoxal 5'-phosphate as a cofactor. In terms of tissue distribution, expressed in all tissues.

The protein localises to the mitochondrion. The catalysed reaction is L-leucine + 2-oxoglutarate = 4-methyl-2-oxopentanoate + L-glutamate. The enzyme catalyses L-isoleucine + 2-oxoglutarate = (S)-3-methyl-2-oxopentanoate + L-glutamate. It carries out the reaction L-valine + 2-oxoglutarate = 3-methyl-2-oxobutanoate + L-glutamate. In terms of biological role, catalyzes the first reaction in the catabolism of the essential branched chain amino acids leucine, isoleucine, and valine. May also function as a transporter of branched chain alpha-keto acids. The chain is Branched-chain-amino-acid aminotransferase, mitochondrial (Bcat2) from Rattus norvegicus (Rat).